The following is a 250-amino-acid chain: Triosephosphate isomerase (250 aa).

9–11 (NWK) contacts substrate. H95 (electrophile) is an active-site residue. E167 (proton acceptor) is an active-site residue. Substrate is bound by residues G173, S212, and 233–234 (GG).

It belongs to the triosephosphate isomerase family. As to quaternary structure, homodimer.

It is found in the cytoplasm. It catalyses the reaction D-glyceraldehyde 3-phosphate = dihydroxyacetone phosphate. The protein operates within carbohydrate biosynthesis; gluconeogenesis. Its pathway is carbohydrate degradation; glycolysis; D-glyceraldehyde 3-phosphate from glycerone phosphate: step 1/1. Functionally, involved in the gluconeogenesis. Catalyzes stereospecifically the conversion of dihydroxyacetone phosphate (DHAP) to D-glyceraldehyde-3-phosphate (G3P). The sequence is that of Triosephosphate isomerase from Endomicrobium trichonymphae.